The sequence spans 277 residues: Glycerol-3-phosphate acyltransferase (277 aa).

Transmembrane regions (helical) follow at residues 3-23 (LFIF…AIIV), 55-75 (IMVM…AKLL), 79-99 (PVTV…PVFF), 111-131 (IGAL…TWLL), and 155-175 (LILV…ILVL). Residues 207–277 (SPATSAEQEF…PKTKTVKEKE (71 aa)) are disordered. Over residues 216–239 (FPGKEVIDTNIDETEKTEQAEAVK) the composition is skewed to basic and acidic residues. 2 stretches are compositionally biased toward basic residues: residues 240–253 (KPKA…AKKT) and 262–271 (KPRSTKPKTK).

Belongs to the PlsY family. Probably interacts with PlsX.

The protein resides in the cell inner membrane. The enzyme catalyses an acyl phosphate + sn-glycerol 3-phosphate = a 1-acyl-sn-glycero-3-phosphate + phosphate. The protein operates within lipid metabolism; phospholipid metabolism. In terms of biological role, catalyzes the transfer of an acyl group from acyl-phosphate (acyl-PO(4)) to glycerol-3-phosphate (G3P) to form lysophosphatidic acid (LPA). This enzyme utilizes acyl-phosphate as fatty acyl donor, but not acyl-CoA or acyl-ACP. This is Glycerol-3-phosphate acyltransferase from Legionella pneumophila (strain Paris).